The chain runs to 386 residues: Succinate--CoA ligase [ADP-forming] subunit beta (386 aa).

4 residues coordinate ATP: Lys-46, Glu-99, Ala-102, and Glu-107. Residues Asn-199 and Asp-213 each contribute to the Mg(2+) site. Substrate is bound by residues Asn-264 and Gly-321–Met-323.

Belongs to the succinate/malate CoA ligase beta subunit family. Heterotetramer of two alpha and two beta subunits. The cofactor is Mg(2+).

The catalysed reaction is succinate + ATP + CoA = succinyl-CoA + ADP + phosphate. It carries out the reaction GTP + succinate + CoA = succinyl-CoA + GDP + phosphate. It participates in carbohydrate metabolism; tricarboxylic acid cycle; succinate from succinyl-CoA (ligase route): step 1/1. Succinyl-CoA synthetase functions in the citric acid cycle (TCA), coupling the hydrolysis of succinyl-CoA to the synthesis of either ATP or GTP and thus represents the only step of substrate-level phosphorylation in the TCA. The beta subunit provides nucleotide specificity of the enzyme and binds the substrate succinate, while the binding sites for coenzyme A and phosphate are found in the alpha subunit. The chain is Succinate--CoA ligase [ADP-forming] subunit beta from Orientia tsutsugamushi (strain Ikeda) (Rickettsia tsutsugamushi).